We begin with the raw amino-acid sequence, 277 residues long: MGNGVQPLDPVAIQMGSLSVKWYGVIIASAVVIALLLALSEANKRKMDKEIIVDLLIWAIPISIISARIYYVIFEWDFYKNNLGEIIKIWHGGIAIYGALIGAVLTAIIFSRVKKISFWQLADVVAPSLIIAQAIGRWGNFMNQEAHGAETTRAFLEGLHLPEFIINQMFIDGIYYQPTFLYESLWNVLGFILLLIIRRTKIRSGELFLSYVIWYSFGRFFIEGMRTDSLMWGDFRVSQVLSLLLIVLSIGLIIYRRLKMNPPYYMEDKFGKVAKKK.

The next 4 membrane-spanning stretches (helical) occupy residues 22–42 (WYGVIIASAVVIALLLALSEA), 51–71 (IIVDLLIWAIPISIISARIYY), 89–109 (IWHGGIAIYGALIGAVLTAII), and 116–136 (ISFWQLADVVAPSLIIAQAIG). Arg-137 serves as a coordination point for a 1,2-diacyl-sn-glycero-3-phospho-(1'-sn-glycerol). A run of 3 helical transmembrane segments spans residues 177 to 197 (QPTFLYESLWNVLGFILLLII), 205 to 225 (GELFLSYVIWYSFGRFFIEGM), and 235 to 255 (FRVSQVLSLLLIVLSIGLIIY).

This sequence belongs to the Lgt family.

It localises to the cell membrane. The catalysed reaction is L-cysteinyl-[prolipoprotein] + a 1,2-diacyl-sn-glycero-3-phospho-(1'-sn-glycerol) = an S-1,2-diacyl-sn-glyceryl-L-cysteinyl-[prolipoprotein] + sn-glycerol 1-phosphate + H(+). The protein operates within protein modification; lipoprotein biosynthesis (diacylglyceryl transfer). Its function is as follows. Catalyzes the transfer of the diacylglyceryl group from phosphatidylglycerol to the sulfhydryl group of the N-terminal cysteine of a prolipoprotein, the first step in the formation of mature lipoproteins. This is Phosphatidylglycerol--prolipoprotein diacylglyceryl transferase from Listeria welshimeri serovar 6b (strain ATCC 35897 / DSM 20650 / CCUG 15529 / CIP 8149 / NCTC 11857 / SLCC 5334 / V8).